A 181-amino-acid chain; its full sequence is ATP synthase subunit delta (181 aa).

The protein belongs to the ATPase delta chain family. As to quaternary structure, F-type ATPases have 2 components, F(1) - the catalytic core - and F(0) - the membrane proton channel. F(1) has five subunits: alpha(3), beta(3), gamma(1), delta(1), epsilon(1). F(0) has three main subunits: a(1), b(2) and c(10-14). The alpha and beta chains form an alternating ring which encloses part of the gamma chain. F(1) is attached to F(0) by a central stalk formed by the gamma and epsilon chains, while a peripheral stalk is formed by the delta and b chains.

The protein localises to the cell inner membrane. Its function is as follows. F(1)F(0) ATP synthase produces ATP from ADP in the presence of a proton or sodium gradient. F-type ATPases consist of two structural domains, F(1) containing the extramembraneous catalytic core and F(0) containing the membrane proton channel, linked together by a central stalk and a peripheral stalk. During catalysis, ATP synthesis in the catalytic domain of F(1) is coupled via a rotary mechanism of the central stalk subunits to proton translocation. In terms of biological role, this protein is part of the stalk that links CF(0) to CF(1). It either transmits conformational changes from CF(0) to CF(1) or is implicated in proton conduction. The sequence is that of ATP synthase subunit delta from Orientia tsutsugamushi (strain Boryong) (Rickettsia tsutsugamushi).